A 174-amino-acid chain; its full sequence is Gamma-crystallin A (174 aa).

Beta/gamma crystallin 'Greek key' domains are found at residues 2-40 and 41-83; these read GKIT…RVDS and GCWM…RSIP. Positions 84–87 are connecting peptide; sequence YTSS. Beta/gamma crystallin 'Greek key' domains are found at residues 88–128 and 129–171; these read HRIR…HVLE and GCWV…RRVM.

Belongs to the beta/gamma-crystallin family.

Functionally, crystallins are the dominant structural components of the vertebrate eye lens. The polypeptide is Gamma-crystallin A (Cryga) (Mus musculus (Mouse)).